The following is a 297-amino-acid chain: MVRVEKIKTKKGKRVLVNRASKTVENDKKALFCRGAKTNEIISHAMMDLFDMKKPLTTKMDKHNPYHLFEDETPIVRAGSKFDTSLFVLGSNSKKKPNCLTFGRTYDGQLLDMAELRITSYKSSSNFEAAKMTLGSKPCVILEGAAFESDGDMKRIGNLMVDWFRGPKVDTVRLEGLETVIVFTALDETNLALRVYRPMLKKSATATPRVELAEMGPSISFEVMRKKLADDALFKLACKKPKALMKKRRKNLSEDVFGNQLARVHVGKQRTDDIQTRKVKALRKTPLVEAAPENAIE.

The 205-residue stretch at 28–232 (KKALFCRGAK…VMRKKLADDA (205 aa)) folds into the Brix domain.

This sequence belongs to the RPF2 family.

Its subcellular location is the nucleus. It is found in the nucleolus. In Caenorhabditis elegans, this protein is Ribosome production factor 2 homolog.